Consider the following 514-residue polypeptide: Histidine ammonia-lyase (514 aa).

Positions 144-146 (ASG) form a cross-link, 5-imidazolinone (Ala-Gly). Serine 145 is subject to 2,3-didehydroalanine (Ser).

Belongs to the PAL/histidase family. Post-translationally, contains an active site 4-methylidene-imidazol-5-one (MIO), which is formed autocatalytically by cyclization and dehydration of residues Ala-Ser-Gly.

Its subcellular location is the cytoplasm. It catalyses the reaction L-histidine = trans-urocanate + NH4(+). It functions in the pathway amino-acid degradation; L-histidine degradation into L-glutamate; N-formimidoyl-L-glutamate from L-histidine: step 1/3. This chain is Histidine ammonia-lyase, found in Rhodospirillum rubrum (strain ATCC 11170 / ATH 1.1.1 / DSM 467 / LMG 4362 / NCIMB 8255 / S1).